A 448-amino-acid polypeptide reads, in one-letter code: Phosphoglucosamine mutase (448 aa).

The active-site Phosphoserine intermediate is the Ser100. Mg(2+) is bound by residues Ser100, Asp240, Asp242, and Asp244. Ser100 carries the post-translational modification Phosphoserine.

This sequence belongs to the phosphohexose mutase family. Mg(2+) is required as a cofactor. Post-translationally, activated by phosphorylation.

It catalyses the reaction alpha-D-glucosamine 1-phosphate = D-glucosamine 6-phosphate. In terms of biological role, catalyzes the conversion of glucosamine-6-phosphate to glucosamine-1-phosphate. This Clostridium acetobutylicum (strain ATCC 824 / DSM 792 / JCM 1419 / IAM 19013 / LMG 5710 / NBRC 13948 / NRRL B-527 / VKM B-1787 / 2291 / W) protein is Phosphoglucosamine mutase.